Consider the following 238-residue polypeptide: ATP-dependent Clp protease ATP-binding subunit CLPT1, chloroplastic (238 aa).

A chloroplast-targeting transit peptide spans 1–64 (MASYTVSFIP…VPKLRCLTSA (64 aa)). The 146-residue stretch at 83–228 (IPKWSARAIK…KEVEKSMNED (146 aa)) folds into the Clp R domain. 2 repeat regions span residues 86-151 (WSAR…LGKS) and 163-228 (LTEP…MNED).

It belongs to the ClpA/ClpB family. Monomer and homodimer. Binds to the CLP3-6 ring (P-ring). The dimers monomerize before association to the P-ring. Component of the chloroplastic Clp protease core complex which consist of at least 16 proteins: CLPP4 (3 copies), CLPP5 (3 copies), CLPR4 (2 copies), ClpP1 (1 copy), CLPP6 (1 copy), CLPR2 (1 copy), CLPT1 (1 copy), CLPT2 (1 copy) and 3 copies of CLPP3 and/or CLPR1 and/or CLPR3. Interacts with CLPC2 and CLPD. Interacts with CPN21. No interactions with CLPS1.

It is found in the plastid. Its subcellular location is the chloroplast. In terms of biological role, accessory protein regulating the assembly of the plastidial Clp protease system. CLPT1 first binds to the heptameric P-ring containing the CLP3-6 subunits followed by CLPT2, and only then does the P-ring combine with the R-ring composed of the clpP1 and CLPR1-4 subunits. Once the core complex is fully assembled, it then associates to the CLPC chaperone partner to form the functional protease. CLPT1 and CLPT2 are partially redundant. The protein is ATP-dependent Clp protease ATP-binding subunit CLPT1, chloroplastic of Arabidopsis thaliana (Mouse-ear cress).